Consider the following 50-residue polypeptide: Insulin 2 (50 aa).

3 disulfide bridges follow: Cys8–Cys36, Cys20–Cys49, and Cys35–Cys40.

The protein belongs to the insulin family. As to quaternary structure, heterodimer of a B chain and an A chain linked by two disulfide bonds.

Its subcellular location is the secreted. Functionally, insulin decreases blood glucose concentration. It increases cell permeability to monosaccharides, amino acids and fatty acids. It accelerates glycolysis, the pentose phosphate cycle, and glycogen synthesis in liver. The protein is Insulin 2 (ins2) of Batrachoididae sp. (Toadfish).